The sequence spans 95 residues: Aspartyl/glutamyl-tRNA(Asn/Gln) amidotransferase subunit C (95 aa).

It belongs to the GatC family. As to quaternary structure, heterotrimer of A, B and C subunits.

It catalyses the reaction L-glutamyl-tRNA(Gln) + L-glutamine + ATP + H2O = L-glutaminyl-tRNA(Gln) + L-glutamate + ADP + phosphate + H(+). The enzyme catalyses L-aspartyl-tRNA(Asn) + L-glutamine + ATP + H2O = L-asparaginyl-tRNA(Asn) + L-glutamate + ADP + phosphate + 2 H(+). Its function is as follows. Allows the formation of correctly charged Asn-tRNA(Asn) or Gln-tRNA(Gln) through the transamidation of misacylated Asp-tRNA(Asn) or Glu-tRNA(Gln) in organisms which lack either or both of asparaginyl-tRNA or glutaminyl-tRNA synthetases. The reaction takes place in the presence of glutamine and ATP through an activated phospho-Asp-tRNA(Asn) or phospho-Glu-tRNA(Gln). The chain is Aspartyl/glutamyl-tRNA(Asn/Gln) amidotransferase subunit C from Caldanaerobacter subterraneus subsp. tengcongensis (strain DSM 15242 / JCM 11007 / NBRC 100824 / MB4) (Thermoanaerobacter tengcongensis).